Here is a 1721-residue protein sequence, read N- to C-terminus: Latent-transforming growth factor beta-binding protein 1 (1721 aa).

Positions 1-23 (MAGAWLRWGLLLWAGLLASSAHG) are cleaved as a signal peptide. A compositionally biased stretch (low complexity) spans 64–81 (RSSAAAGAPSRASPGVPS). Residues 64-158 (RSSAAAGAPS…SGGGSRLQVH (95 aa)) are disordered. A compositionally biased stretch (pro residues) spans 99-111 (RPPPPPPPEPARP). Residues 112-130 (AVPGGQLHPNPGGHPAAAP) are compositionally biased toward low complexity. One can recognise an EGF-like 1 domain in the interval 187 to 219 (TKPSCVPPCQNGGMCLRPQLCVCKPGTKGKACE). 3 disulfide bridges follow: cysteine 191–cysteine 201, cysteine 195–cysteine 207, and cysteine 209–cysteine 218. The interval 228-259 (SPVFGGQSPGAASSWGPPEQAAKHTSSKKADT) is disordered. N-linked (GlcNAc...) asparagine glycosylation is found at asparagine 347 and asparagine 378. The 33-residue stretch at 399–431 (RVVICHLPCMNGGQCSSRDKCQCPPNFTGKLCQ) folds into the EGF-like 2 domain. Cystine bridges form between cysteine 403/cysteine 413, cysteine 407/cysteine 419, cysteine 421/cysteine 430, cysteine 559/cysteine 581, cysteine 568/cysteine 594, and cysteine 582/cysteine 597. The N-linked (GlcNAc...) asparagine glycan is linked to asparagine 424. The TB 1 domain occupies 557 to 609 (GRCFQETIGSQCGKALPGLSKQEDCCGTVGTSWGFNKCQKCPKKPSYHGYNQM). A glycan (N-linked (GlcNAc...) asparagine) is linked at asparagine 620. Residues 626-663 (DINECQLQGVCPNGECLNTMGSYRCTCKIGFGPDPTFS) enclose the EGF-like 3; calcium-binding domain. Disulfide bonds link cysteine 630/cysteine 641, cysteine 636/cysteine 650, cysteine 652/cysteine 665, cysteine 679/cysteine 702, cysteine 689/cysteine 714, cysteine 703/cysteine 717, and cysteine 704/cysteine 729. O-linked (Glc) serine glycosylation occurs at serine 647. The region spanning 677–729 (GPCYRLVSSGRQCMHPLSVHLTKQLCCCSVGKAWGPHCEKCPLPGTAAFKEIC) is the TB 2 domain. The disordered stretch occupies residues 750–811 (VGKGPVFVKP…APPEKEIPSL (62 aa)). O-linked (GalNAc...) threonine glycans are attached at residues threonine 769 and threonine 801. The EGF-like 4; calcium-binding domain occupies 873-910 (EINECTVNPDICGAGHCINLPVRYTCICYEGYRFSEQQ). Disulfide bonds link cysteine 877–cysteine 889, cysteine 884–cysteine 898, cysteine 900–cysteine 913, cysteine 919–cysteine 931, cysteine 926–cysteine 940, cysteine 942–cysteine 955, cysteine 961–cysteine 972, cysteine 967–cysteine 981, cysteine 984–cysteine 996, cysteine 1002–cysteine 1013, cysteine 1008–cysteine 1022, cysteine 1025–cysteine 1036, cysteine 1042–cysteine 1053, cysteine 1048–cysteine 1062, cysteine 1064–cysteine 1077, cysteine 1083–cysteine 1094, cysteine 1089–cysteine 1103, cysteine 1105–cysteine 1118, cysteine 1124–cysteine 1135, cysteine 1130–cysteine 1144, cysteine 1146–cysteine 1159, cysteine 1165–cysteine 1177, cysteine 1172–cysteine 1186, cysteine 1188–cysteine 1200, cysteine 1206–cysteine 1218, cysteine 1212–cysteine 1227, cysteine 1229–cysteine 1242, cysteine 1248–cysteine 1260, and cysteine 1254–cysteine 1269. One can recognise an EGF-like 5; calcium-binding domain in the interval 915-956 (DIDECTQVQHLCSQGRCENTEGSFLCICPAGFMASEEGTNCI). A glycan (O-linked (Glc) serine) is linked at serine 937. The EGF-like 6; calcium-binding domain maps to 957 to 997 (DVDECLRPDVCGEGHCVNTVGAFRCEYCDSGYRMTQRGRCE). Residue asparagine 974 is modified to (3R)-3-hydroxyasparagine. The EGF-like 7; calcium-binding domain occupies 998–1037 (DIDECLNPSTCPDEQCVNSPGSYQCVPCTEGFRGWNGQCL). O-linked (Glc) serine glycosylation occurs at serine 1019. Residues 1038–1078 (DVDECLEPNVCANGDCSNLEGSYMCSCHKGYTRTPDHKHCR) enclose the EGF-like 8; calcium-binding domain. O-linked (Glc) serine glycosylation occurs at serine 1059. Positions 1079–1119 (DIDECQQGNLCVNGQCKNTEGSFRCTCGQGYQLSAAKDQCE) constitute an EGF-like 9; calcium-binding domain. The 41-residue stretch at 1120–1160 (DIDECQHRHLCAHGQCRNTEGSFQCVCDQGYRASGLGDHCE) folds into the EGF-like 10; calcium-binding domain. Asparagine 1137 is modified ((3R)-3-hydroxyasparagine). Serine 1141 carries O-linked (Glc) serine glycosylation. Positions 1161–1201 (DINECLEDKSVCQRGDCINTAGSYDCTCPDGFQLDDNKTCQ) constitute an EGF-like 11; calcium-binding domain. Positions 1174 to 1176 (RGD) match the Cell attachment site motif. The N-linked (GlcNAc...) asparagine glycan is linked to asparagine 1197. An EGF-like 12; calcium-binding domain is found at 1202 to 1243 (DINECEHPGLCGPQGECLNTEGSFHCVCQQGFSISADGRTCE). A glycan (O-linked (Glc) serine) is linked at serine 1224. One can recognise an EGF-like 13; calcium-binding domain in the interval 1244–1281 (DIDECVNNTVCDSHGFCDNTAGSFRCLCYQGFQAPQDG). An N-linked (GlcNAc...) asparagine glycan is attached at asparagine 1250. The 43-residue stretch at 1286-1328 (DVNECELLSGVCGEAFCENVEGSFLCVCADENQEYSPMTGQCR) folds into the EGF-like 14; calcium-binding domain. Residues 1344–1411 (EEKKECYYNL…PKGKGFVPAG (68 aa)) form an 8-Cys3 region region. The TB 3 domain occupies 1347–1401 (KECYYNLNDASLCDNVLAPNVTKQECCCTSGVGWGDNCEIFPCPVLGTAEFTEMC). 4 cysteine pairs are disulfide-bonded: cysteine 1349–cysteine 1372, cysteine 1359–cysteine 1384, cysteine 1373–cysteine 1389, and cysteine 1374–cysteine 1401. Residue asparagine 1366 is glycosylated (N-linked (GlcNAc...) asparagine). Position 1414 is a phosphoserine; by FAM20C (serine 1414). In terms of domain architecture, EGF-like 15; calcium-binding spans 1424 to 1466 (DADECLLFGQEICKNGFCLNTRPGYECYCKQGTYYDPVKLQCF). The EGF-like 16; calcium-binding domain occupies 1467–1503 (DMDECQDPSSCIDGQCVNTEGSYNCFCTHPMVLDASE). 6 cysteine pairs are disulfide-bonded: cysteine 1471–cysteine 1482, cysteine 1477–cysteine 1491, cysteine 1526–cysteine 1550, cysteine 1536–cysteine 1562, cysteine 1551–cysteine 1565, and cysteine 1552–cysteine 1577. Residue serine 1488 is glycosylated (O-linked (Glc) serine). A C-terminal domain region spans residues 1507–1721 (IRPAESNEQI…LNLEKDSDLE (215 aa)). The TB 4 domain occupies 1524–1577 (DLCWEHLSDEYVCSRPLVGKQTTYTECCCLYGEAWGMQCALCPLKDSDDYAQLC). 2 positions are modified to phosphoserine: serine 1597 and serine 1616. An EGF-like 17 domain is found at 1621-1657 (QAEECGILNGCENGRCVRVQEGYTCDCFDGYHLDTAK). Disulfide bonds link cysteine 1625–cysteine 1636, cysteine 1631–cysteine 1645, cysteine 1666–cysteine 1681, cysteine 1676–cysteine 1690, and cysteine 1692–cysteine 1705. Positions 1662 to 1706 (DVNECDELNNRMSLCKNAKCINTDGSYKCLCLPGYVPSDKPNYCT) constitute an EGF-like 18; calcium-binding domain. O-linked (Glc) serine glycosylation occurs at serine 1687.

It belongs to the LTBP family. In terms of assembly, interacts with TGFB1; associates via disulfide bonds with the Latency-associated peptide chain (LAP) regulatory chain of TGFB1, leading to regulate activation of TGF-beta-1. LTBP1 does not bind directly to TGF-beta-1, the active chain of TGFB1. Interacts (via C-terminal domain) with FBN1 (via N-terminal domain). Interacts with FBN2. Interacts with ADAMTSL2. Interacts with EFEMP2. Contains hydroxylated asparagine residues. In terms of processing, isoform Short N-terminus is blocked. Post-translationally, two intrachain disulfide bonds from the TB3 domain are rearranged upon TGFB1 binding, and form interchain bonds with TGFB1 propeptide, anchoring it to the extracellular matrix. O-glycosylated on serine residues by POGLUT2 and POGLUT3. As to expression, expressed in the aorta (at protein level). Isoform Long: Expressed in fibroblasts.

It localises to the secreted. The protein localises to the extracellular space. Its subcellular location is the extracellular matrix. Its function is as follows. Key regulator of transforming growth factor beta (TGFB1, TGFB2 and TGFB3) that controls TGF-beta activation by maintaining it in a latent state during storage in extracellular space. Associates specifically via disulfide bonds with the Latency-associated peptide (LAP), which is the regulatory chain of TGF-beta, and regulates integrin-dependent activation of TGF-beta. Outcompeted by LRRC32/GARP for binding to LAP regulatory chain of TGF-beta. The polypeptide is Latent-transforming growth factor beta-binding protein 1 (Homo sapiens (Human)).